The following is a 231-amino-acid chain: Lipoprotein-releasing system ATP-binding protein LolD (231 aa).

In terms of domain architecture, ABC transporter spans 6–230 (LSCKNVSKKY…DGELELVINS (225 aa)). 42-49 (GLSGSGKT) serves as a coordination point for ATP.

It belongs to the ABC transporter superfamily. Lipoprotein translocase (TC 3.A.1.125) family. As to quaternary structure, the complex is composed of two ATP-binding proteins (LolD) and two transmembrane proteins (LolC and LolE).

Its subcellular location is the cell inner membrane. Functionally, part of the ABC transporter complex LolCDE involved in the translocation of mature outer membrane-directed lipoproteins, from the inner membrane to the periplasmic chaperone, LolA. Responsible for the formation of the LolA-lipoprotein complex in an ATP-dependent manner. This Francisella tularensis subsp. tularensis (strain FSC 198) protein is Lipoprotein-releasing system ATP-binding protein LolD.